A 131-amino-acid polypeptide reads, in one-letter code: Large ribosomal subunit protein bL17 (131 aa).

This sequence belongs to the bacterial ribosomal protein bL17 family. In terms of assembly, part of the 50S ribosomal subunit. Contacts protein L32.

This chain is Large ribosomal subunit protein bL17, found in Shewanella amazonensis (strain ATCC BAA-1098 / SB2B).